We begin with the raw amino-acid sequence, 118 residues long: Cycloviolacin-O8 (118 aa).

An N-terminal signal peptide occupies residues 1–22; the sequence is MEMKNMVVGLFLIAAFALPALA. Residues 23-84 constitute a propeptide that is removed on maturation; that stretch reads TNFEKDFITH…THSNSINALG (62 aa). The cyclopeptide (Gly-Asn) cross-link spans 85 to 115; that stretch reads GTLPCGESCVWIPCISSVVGCSCKSKVCYKN. Disulfide bonds link Cys-89/Cys-105, Cys-93/Cys-107, and Cys-98/Cys-112. The propeptide occupies 116-118; that stretch reads SLA.

Cycloviolacin-O8 is a cyclic peptide. As to expression, expressed in leaves, petals, petioles and roots but not in runners (at protein level).

Its function is as follows. Probably participates in a plant defense mechanism. In Viola odorata (Sweet violet), this protein is Cycloviolacin-O8 (Voc1).